The chain runs to 221 residues: Probable septum site-determining protein MinC (221 aa).

It belongs to the MinC family. Interacts with MinD and FtsZ.

In terms of biological role, cell division inhibitor that blocks the formation of polar Z ring septums. Rapidly oscillates between the poles of the cell to destabilize FtsZ filaments that have formed before they mature into polar Z rings. Prevents FtsZ polymerization. The polypeptide is Probable septum site-determining protein MinC (Shewanella oneidensis (strain ATCC 700550 / JCM 31522 / CIP 106686 / LMG 19005 / NCIMB 14063 / MR-1)).